Consider the following 370-residue polypeptide: GMP synthase [glutamine-hydrolyzing] subunit B (370 aa).

The region spanning phenylalanine 3–arginine 189 is the GMPS ATP-PPase domain. Residue serine 29–threonine 35 participates in ATP binding.

In terms of assembly, heterodimer composed of a glutamine amidotransferase subunit (A) and a GMP-binding subunit (B).

The enzyme catalyses XMP + L-glutamine + ATP + H2O = GMP + L-glutamate + AMP + diphosphate + 2 H(+). The protein operates within purine metabolism; GMP biosynthesis; GMP from XMP (L-Gln route): step 1/1. In terms of biological role, catalyzes the synthesis of GMP from XMP. This Sulfurisphaera tokodaii (strain DSM 16993 / JCM 10545 / NBRC 100140 / 7) (Sulfolobus tokodaii) protein is GMP synthase [glutamine-hydrolyzing] subunit B (guaAB).